The primary structure comprises 236 residues: Sperm flagellar protein 1 (236 aa).

The region spanning 7-112 (EEALHQLYLW…VLIPLRQRLE (106 aa)) is the Calponin-homology (CH) domain. Residues 115–176 (QRRRKQGAGS…PRPPAYNRAL (62 aa)) are disordered. An essential for homodimerization and microtubule bundling activity region spans residues 183–236 (VLQIAEKEQELLASQETVQVLQMKVRRLEHLLQLKNVRIEDLSRRLQQAERKQR).

Homodimer. Interacts with actin, TJP1, CGN and CDH1. Expressed in the intestinal epithelial cells (at protein level).

The protein resides in the cytoplasm. The protein localises to the cell projection. It is found in the cilium. It localises to the flagellum. Its subcellular location is the cytoskeleton. The protein resides in the cilium axoneme. The protein localises to the apical cell membrane. It is found in the basolateral cell membrane. It localises to the stress fiber. Its subcellular location is the microvillus. The protein resides in the lamellipodium. The protein localises to the filopodium. In terms of biological role, microtubule-associated protein involved in the stabilization of microtubules along the axis of migration during radial intercalation. Promotes the establishment and stabilization of an axis of microtubules required for the active migration of cells into the outer epithelium. Microtubule-associated protein that promotes microtubule bundling and stabilizes microtubules against depolymerization in response to cold shock. Essential for ciliary central apparatus formation which requires both its microtubule-binding and bundling activities and for ciliary localization of HYDIN and SPAG6 in ependymal cilia. Binds actin in intestinal epithelial cells (IECs), essential for IECs survival and contributes to formation of filopodia and lamellipodia in migrating IECs. Regulates planar cell polarity signaling pathway and asymmetric microtubule accumulation in ciliated epithelia. The polypeptide is Sperm flagellar protein 1 (SPEF1) (Homo sapiens (Human)).